The primary structure comprises 145 residues: uncharacterized protein (145 aa).

A run of 2 helical transmembrane segments spans residues 20 to 40 and 116 to 136; these read LIGP…GMFF and MIML…VLSA.

It localises to the membrane. This is an uncharacterized protein from Saccharomyces cerevisiae (strain ATCC 204508 / S288c) (Baker's yeast).